The primary structure comprises 622 residues: Chaperone protein HscA homolog (622 aa).

Belongs to the heat shock protein 70 family.

In terms of biological role, chaperone involved in the maturation of iron-sulfur cluster-containing proteins. Has a low intrinsic ATPase activity which is markedly stimulated by HscB. The polypeptide is Chaperone protein HscA homolog (Azoarcus sp. (strain BH72)).